Here is a 220-residue protein sequence, read N- to C-terminus: Probable nicotinate-nucleotide adenylyltransferase (220 aa).

It belongs to the NadD family.

It catalyses the reaction nicotinate beta-D-ribonucleotide + ATP + H(+) = deamido-NAD(+) + diphosphate. It functions in the pathway cofactor biosynthesis; NAD(+) biosynthesis; deamido-NAD(+) from nicotinate D-ribonucleotide: step 1/1. In terms of biological role, catalyzes the reversible adenylation of nicotinate mononucleotide (NaMN) to nicotinic acid adenine dinucleotide (NaAD). This Yersinia enterocolitica serotype O:8 / biotype 1B (strain NCTC 13174 / 8081) protein is Probable nicotinate-nucleotide adenylyltransferase.